The following is a 618-amino-acid chain: MSLSTEQMLRDYPRSMQINGQIPKNAIHETYGNDGVDVFIAGSGPIGATYAKLCVEAGLRVVMVEIGAADSFYAVNAEEGTAVPYVPGYHKKNEIEFQKDIDRFVNVIKGALQQVSVPVRNQNVPTLDPGAWSAPPGSSAISNGKNPHQREFENLSAEAVTRGVGGMSTHWTCSTPRIHPPMESLPGIGRPKLSNDPAEDDKEWNELYSEAERLIGTSTKEFDESIRHTLVLRSLQDAYKDRQRIFRPLPLACHRLKNAPEYVEWHSAENLFHSIYNDDKQKKLFTLLTNHRCTRLALTGGYEKKIGAAEVRNLLATRNPSSQLDSYIMAKVYVLASGAIGNPQILYNSGFSGLQVTPRNDSLIPNLGRYITEQPMAFCQIVLRQEFVDSVRDDPYGLPWWKEAVAQHIAKNPTDALPIPFRDPEPQVTTPFTEEHPWHTQIHRDAFSYGAVGPEVDSRVIVDLRWFGATDPEANNLLVFQNDVQDGYSMPQPTFRYRPSTASNVRARKMMADMCEVASNLGGYLPTSPPQFMDPGLALHLAGTTRIGFDKATTVADNNSLVWDFANLYVAGNGTIRTGFGENPTLTSMCHAIKSARSIINTLKGGTDGKNTGEHRNL.

Histidine 170 is subject to Tele-8alpha-FAD histidine. Substrate contacts are provided by glutamine 441 and histidine 443. The active-site Proton acceptor is the histidine 540. Asparagine 583 is a catalytic residue.

This sequence belongs to the GMC oxidoreductase family. Homotetramer. Requires FAD as cofactor.

It catalyses the reaction D-glucose + O2 = 2-dehydro-D-glucose + H2O2. In terms of biological role, catalyzes the oxidation of various aldopyranoses and disaccharides on carbon-2 to the corresponding 2-keto sugars concomitant with the reduction of O(2) to H(2)O(2). The sequence is that of Pyranose 2-oxidase (p2ox) from Lyophyllum shimeji (Hon-shimeji).